A 356-amino-acid chain; its full sequence is Protein pelota homolog (356 aa).

The protein belongs to the eukaryotic release factor 1 family. Pelota subfamily. Monomer. It depends on a divalent metal cation as a cofactor.

The protein resides in the cytoplasm. In terms of biological role, may function in recognizing stalled ribosomes, interact with stem-loop structures in stalled mRNA molecules, and effect endonucleolytic cleavage of the mRNA. May play a role in the release non-functional ribosomes and degradation of damaged mRNAs. Has endoribonuclease activity. The polypeptide is Protein pelota homolog (Aeropyrum pernix (strain ATCC 700893 / DSM 11879 / JCM 9820 / NBRC 100138 / K1)).